The primary structure comprises 360 residues: Protein Wnt-2 (360 aa).

The N-terminal stretch at 1–25 (MNAPLGGIWLWLPLLLTWLTPEVNS) is a signal peptide. Intrachain disulfides connect cysteine 76–cysteine 87, cysteine 127–cysteine 135, cysteine 137–cysteine 157, cysteine 206–cysteine 220, cysteine 208–cysteine 215, cysteine 278–cysteine 309, cysteine 294–cysteine 304, cysteine 308–cysteine 348, cysteine 324–cysteine 339, cysteine 326–cysteine 336, and cysteine 331–cysteine 332. Serine 212 is lipidated: O-palmitoleoyl serine; by PORCN. An N-linked (GlcNAc...) asparagine glycan is attached at asparagine 295.

This sequence belongs to the Wnt family. Post-translationally, palmitoleoylation is required for efficient binding to frizzled receptors. Depalmitoleoylation leads to Wnt signaling pathway inhibition. As to expression, expressed in brain in the thalamus, in fetal and adult lung and in placenta.

Its subcellular location is the secreted. The protein localises to the extracellular space. It is found in the extracellular matrix. Ligand for members of the frizzled family of seven transmembrane receptors. Functions in the canonical Wnt signaling pathway that results in activation of transcription factors of the TCF/LEF family. Functions as a upstream regulator of FGF10 expression. Plays an important role in embryonic lung development. May contribute to embryonic brain development by regulating the proliferation of dopaminergic precursors and neurons. This Homo sapiens (Human) protein is Protein Wnt-2 (WNT2).